Reading from the N-terminus, the 51-residue chain is Putative ribosomal protein eL39-like 5 (51 aa).

It belongs to the eukaryotic ribosomal protein eL39 family.

The chain is Putative ribosomal protein eL39-like 5 (RPL39P5) from Homo sapiens (Human).